Reading from the N-terminus, the 727-residue chain is Catalase-peroxidase (727 aa).

Positions Met-1–Arg-26 are disordered. Residues Trp-97 to Tyr-219 constitute a cross-link (tryptophyl-tyrosyl-methioninium (Trp-Tyr) (with M-245)). The active-site Proton acceptor is His-98. The segment at residues Tyr-219–Met-245 is a cross-link (tryptophyl-tyrosyl-methioninium (Tyr-Met) (with W-97)). His-260 contacts heme b.

It belongs to the peroxidase family. Peroxidase/catalase subfamily. Homodimer or homotetramer. It depends on heme b as a cofactor. Formation of the three residue Trp-Tyr-Met cross-link is important for the catalase, but not the peroxidase activity of the enzyme.

The enzyme catalyses H2O2 + AH2 = A + 2 H2O. The catalysed reaction is 2 H2O2 = O2 + 2 H2O. Bifunctional enzyme with both catalase and broad-spectrum peroxidase activity. The polypeptide is Catalase-peroxidase (Allorhizobium ampelinum (strain ATCC BAA-846 / DSM 112012 / S4) (Agrobacterium vitis (strain S4))).